The primary structure comprises 127 residues: MRHYEIVILVHPDQSSQVPAMVERYQSMIKEKGGKVHRLEDWGRRQLAYSIDKVHKAHYLLMNIESDQGVISELENAFRYNDAVIRSLILKRDHAITQSSLIMQGAEKGKSSRKEKVDAEAEASEEA.

Positions 102 to 127 (IMQGAEKGKSSRKEKVDAEAEASEEA) are disordered. Basic and acidic residues predominate over residues 107–119 (EKGKSSRKEKVDA).

Belongs to the bacterial ribosomal protein bS6 family.

Binds together with bS18 to 16S ribosomal RNA. This Coxiella burnetii (strain CbuK_Q154) (Coxiella burnetii (strain Q154)) protein is Small ribosomal subunit protein bS6.